We begin with the raw amino-acid sequence, 847 residues long: MKKTPVFLESLVTNMLRLRAICPFSWRVFQFRPISCEPLIIQMNKCTDEEQMFGFIERNKAILSEKQVGCAFDMLWKLQKQKTSLLKNAEYVRDHPQFLTLHNLATNKFKLMNDDTLVNVLYVTQQFAGEAHDPLVEALVTEAWRRLERFDIKLLSEFSSCLADQHLYFSPLMGKIADIVHRNLETTQDLSSLSVLMVNISSLISRHFQQQLVNKTELLFDTIDSSEVNVAKSIAKFLRNVRYRYQPLLERCNNVFLSNVDHLDLDSISKILSVYKFLQFNSFEFIIMAKKKLTEMIPLCNHPASFVKLFVALGPIAGPEEKKQLKSTMLLMSEDLTGEQALAVLGAMGDMESRNSCLIKRVTSVLHKHLDGYKPLELLKITQELTFLHFQRKEFFAKLRELLLSYLKNSFIPTEVSVLVRAISLLPSPHLDEVGISRIEAVLPQCDLNNLSSFATSVLRWIQHDHMYLDNMTAKQLKLLQKLDHYGRQRLQHSNSLDLLRKELKSLKGNTFPESLLEEMIATLQHFMDDINYINVGEIASFISSTDYLSTLLLDRIASVAVQQIEKIHPFTIPAIIRPFSVLNYDPPQRDEFLGTCVQHLNSYLGILDPFILVFLGFSLATLEYFPEDLLKAIFNIKFLARLDSQLEILSPSRSARVQFHLMELNRSVCLECPEFQIPWFHDRFCQQYNKGIGGMDGTQQQIFKMLAEVLGGINCVKASVLTPYYHKVDFECILDKRKKPLPYGSHNIALGQLPEMPWESNIEIVGSRLPPGAERIALEFLDSKALCRNIPHMKGKSAMKKRHLEILGYRVIQISQFEWNSMALSTKDARMDYLRECIFGEVKSCL.

Position 360 is an N6-acetyllysine (Lys360). An RAP domain is found at 777-837 (IALEFLDSKA…KDARMDYLRE (61 aa)).

It belongs to the FAST kinase family. Expression detected in spleen, thymus, testis, ovary, colon, heart, smooth muscle, kidney, brain, lung, liver and white adipose tissue with highest expression in heart.

It localises to the mitochondrion. Its function is as follows. Involved in the down-regulation of mitochondrial MT-ND3 mRNA levels which leads to decreased respiratory complex I abundance and activity. The protein is FAST kinase domain-containing protein 1, mitochondrial (FASTKD1) of Homo sapiens (Human).